The chain runs to 555 residues: Probable terpene synthase 6 (555 aa).

Positions 309, 313, and 460 each coordinate Mg(2+). The DDXXD motif motif lies at 309 to 313 (DDTYD).

This sequence belongs to the terpene synthase family. Mg(2+) serves as cofactor.

Its function is as follows. Probable sesquiterpene synthase. The polypeptide is Probable terpene synthase 6 (TPS6) (Ricinus communis (Castor bean)).